The chain runs to 791 residues: Linear element protein rec10 (791 aa).

Disordered stretches follow at residues 462 to 523 (NSVP…AKSN) and 644 to 672 (LLDG…TLIS). The Nuclear localization signal signature appears at 485–492 (QRRKDGKF). A compositionally biased stretch (basic residues) spans 493-503 (AKSTKRKKQKS). Residues 644-657 (LLDGTCSSPPNNEC) show a composition bias toward polar residues.

As to quaternary structure, component of linear elements (LinEs), which are similar to synaptonemal complexes, at least composed of rec27, rec25, rec10 and mug20. Interacts with rec25; the interaction is direct. Interacts with hop1 (via N-terminus); the interaction is direct. Interacts with rec15 (via C-terminus); the interaction is direct.

The protein resides in the nucleus. The protein localises to the chromosome. Functionally, organizes linear element components on chromosomes and is thus required for meiotic DNA recombination. The protein is Linear element protein rec10 of Schizosaccharomyces pombe (strain 972 / ATCC 24843) (Fission yeast).